A 42-amino-acid chain; its full sequence is Large ribosomal subunit protein bL34c (42 aa).

It belongs to the bacterial ribosomal protein bL34 family.

Its subcellular location is the plastid. The protein resides in the chloroplast. The chain is Large ribosomal subunit protein bL34c (rpl34) from Olisthodiscus luteus (Marine phytoflagellate).